The chain runs to 927 residues: DNA mismatch repair protein MutS (927 aa).

Residue 646–653 (GPNMAGKS) participates in ATP binding. Residues 904–927 (SAQPGSAEQGESPDKHDEGKNSRG) form a disordered region. Over residues 915-927 (SPDKHDEGKNSRG) the composition is skewed to basic and acidic residues.

The protein belongs to the DNA mismatch repair MutS family.

This protein is involved in the repair of mismatches in DNA. It is possible that it carries out the mismatch recognition step. This protein has a weak ATPase activity. The chain is DNA mismatch repair protein MutS from Desulfovibrio desulfuricans (strain ATCC 27774 / DSM 6949 / MB).